The sequence spans 238 residues: Lactate utilization protein A (238 aa).

The protein belongs to the LutA/YkgE family.

In terms of biological role, is involved in L-lactate degradation and allows cells to grow with lactate as the sole carbon source. This Geobacillus sp. (strain WCH70) protein is Lactate utilization protein A.